A 656-amino-acid chain; its full sequence is Kinesin-related protein SMY1 (656 aa).

Positions 27 to 364 (HIEVILRAIP…LEFGDSIRQI (338 aa)) constitute a Kinesin motor domain. Position 114-121 (114-121 (GPSFSGKS)) interacts with ATP. A Phosphothreonine modification is found at threonine 583.

Belongs to the TRAFAC class myosin-kinesin ATPase superfamily. Kinesin family.

It is found in the cytoplasm. Its subcellular location is the cytoskeleton. Functionally, possible microtubule-based motor that can interact or substitute with myosin 2 (MYO2). The protein is Kinesin-related protein SMY1 (SMY1) of Saccharomyces cerevisiae (strain ATCC 204508 / S288c) (Baker's yeast).